The following is a 381-amino-acid chain: MASPSCFHSEDEDSLKGCEMYVQKHGIQQVLKECIVHLCVAKPDRPLRFLREHFEKLEKEENRQILARQKSNSQCDSHDEEISPTPPNPVVKARRRRGGVSAEVYTEEDAVSYVRKVIPKDYKTMTALAKAISKNVLFSHLDDNERSDIFDAMFPVTHIGGETVIQQGNEGDNFYVIDQGEVDVYVNGEWVTNISEGGSFGELALIYGTPRAATVKAKTDLKLWGIDRDSYRRILMGSTLRKRKMYEEFLSKVSILESLEKWERLTVADALEPVQFEDGEKIVVQGEPGDDFYIITEGTASVLQRRSPNEEYVEVGRLGPSDYFGEIALLLNRPRAATVVARGPLKCVKLDRPRFERVLGPCSEILKRNIQRYNSFISLTV.

Residues methionine 1–valine 136 form a dimerization and phosphorylation region. The residue at position 3 (serine 3) is a Phosphoserine. Position 21 is a 3'-nitrotyrosine (tyrosine 21). Residues leucine 66–asparagine 88 are disordered. Phosphoserine occurs at positions 77 and 83. Threonine 85 carries the phosphothreonine modification. Positions arginine 96 to valine 100 match the Pseudophosphorylation motif motif. Residue arginine 97 is modified to Omega-N-methylarginine. 3',5'-cyclic AMP is bound by residues leucine 137–serine 254, glutamate 202, arginine 211, isoleucine 255–valine 381, glutamate 326, and arginine 335.

This sequence belongs to the cAMP-dependent kinase regulatory chain family. In terms of assembly, the inactive holoenzyme is composed of two regulatory chains and two catalytic chains. Activation by cAMP releases the two active catalytic monomers and the regulatory dimer. Interacts with PRKX; regulates this cAMP-dependent protein kinase. Interacts with smAKAP; this interaction may target PRKAR1B to the plasma membrane. In terms of processing, the pseudophosphorylation site binds to the substrate-binding region of the catalytic chain, resulting in the inhibition of its activity. In terms of tissue distribution, four types of regulatory chains are found: I-alpha, I-beta, II-alpha, and II-beta. Their expression varies among tissues and is in some cases constitutive and in others inducible.

The protein localises to the cell membrane. Its function is as follows. Regulatory subunit of the cAMP-dependent protein kinases involved in cAMP signaling in cells. The polypeptide is cAMP-dependent protein kinase type I-beta regulatory subunit (Prkar1b) (Mus musculus (Mouse)).